We begin with the raw amino-acid sequence, 424 residues long: MHHFFKGQFFDFETCRILGTAVYGGADVAEVLEAVGQIRDGDPVSWGRAWAIQAERALVLAEEACKSGDRTAARDAYLRGSNYTRASGYMLTGEGPNRPDPRSREIVERVQAIFRKAAALFDHPVQFLKIPFEGGLKLPCTLYLPPPDRRLPGKIPILISGGGADALQEELYYMHPSAGPDLGYAVLTFEGPGQGVMLRKHDAKMRPDWEAVAGAVIDFLEELARSQPDLDLDTSRIAFSGCSLGGYFALRAAADPRVKACVSLDPLYSFWDFAMEHVSPTFINAWEAGWLKDGAVDAVVRMMMAMSFQMRWELSIAGTFFGQTSPARIMKEMKKFSLAGGQLRRVQCPVLVSGASHSLYLEGNHHTMRIYNELVNHTKGDKQLWLTATPGQGSLQAKMGALRLANQKTFKFLDEHFGIERPQL.

The active-site Nucleophile is S243.

Belongs to the AB hydrolase superfamily. FUS2 hydrolase family. Homodimer.

It functions in the pathway secondary metabolite biosynthesis. Hydrolyase; part of the gene cluster that mediates the biosynthesis of a tyrosine-derived cytochalasan acting as a fungal signal recognized by resistant rice plants and leads to avirulence in Pi33 resistant rice cultivars. The first step in the pathway is catalyzed by the hybrid PKS-NRPS ACE1, assisted by the enoyl reductase RAP1, that are responsible for fusion of the tyrosine precursor and the polyketide backbone. The polyketide synthase module (PKS) of ACE1 is responsible for the synthesis of the polyketide backbone and the downstream nonribosomal peptide synthetase (NRPS) amidates the carboxyl end of the polyketide with the tyrosine precursor. Because ACE1 lacks a designated enoylreductase (ER) domain, the required activity is provided the enoyl reductase RAP1. Reduction by the hydrolyase ORFZ, followed by dehydration and intra-molecular Diels-Alder cyclization by the Diels-Alderase ORF3 then yield the required isoindolone-fused macrocycle. A number of oxidative steps catalyzed by the tailoring enzymes identified within the cluster, including cytochrome P450 monooxygenases CYP1 to CYP4, the FAD-linked oxidoreductase OXR2 and the short-chain dehydrogenase/reductase OXR1, are further required to afford the final cytochalasans that confer avirulence and which have still to be identified. The monooxygenase CYP1 has been shown to be a site-selective C-18 hydroxylase whereas the function of CYP3 is the site-selective epoxidation of the C-6/C-7 olefin that is present in some intermediate compounds. Finally, SYN2 and RAP2 are not required for avirulence in Pi33 resistant rice cultivars. This is Hydrolase ORFZ from Pyricularia oryzae (strain 70-15 / ATCC MYA-4617 / FGSC 8958) (Rice blast fungus).